The chain runs to 412 residues: Phosphoglycerate kinase (412 aa).

Substrate contacts are provided by residues 22 to 24, R37, 60 to 63, R120, and R172; these read DFN and HLGK. ATP contacts are provided by residues K223, G310, E341, and 368 to 371; that span reads GGDS.

This sequence belongs to the phosphoglycerate kinase family. As to quaternary structure, monomer.

The protein localises to the cytoplasm. It catalyses the reaction (2R)-3-phosphoglycerate + ATP = (2R)-3-phospho-glyceroyl phosphate + ADP. The protein operates within carbohydrate degradation; glycolysis; pyruvate from D-glyceraldehyde 3-phosphate: step 2/5. In Spiroplasma citri, this protein is Phosphoglycerate kinase.